A 37-amino-acid polypeptide reads, in one-letter code: Cytochrome b6-f complex subunit 5 (37 aa).

The helical transmembrane segment at 5–25 threads the bilayer; sequence LLSGIVLGLIPITLFGLLVAA.

It belongs to the PetG family. The 4 large subunits of the cytochrome b6-f complex are cytochrome b6, subunit IV (17 kDa polypeptide, PetD), cytochrome f and the Rieske protein, while the 4 small subunits are PetG, PetL, PetM and PetN. The complex functions as a dimer.

The protein localises to the plastid. Its subcellular location is the chloroplast thylakoid membrane. Component of the cytochrome b6-f complex, which mediates electron transfer between photosystem II (PSII) and photosystem I (PSI), cyclic electron flow around PSI, and state transitions. PetG is required for either the stability or assembly of the cytochrome b6-f complex. The polypeptide is Cytochrome b6-f complex subunit 5 (Pyropia yezoensis (Susabi-nori)).